A 469-amino-acid polypeptide reads, in one-letter code: MSAKPTTLYDKIWNDHLVHEAEDGTCLLYIDRHLVHEVTSPQAFEGLRTAGRKVHAPEKTLAVVDHNVPTTDRSKPNPDPESAEQIAALAENARDFGITYYNEFDKRQGVVHVIGPEQGFTLPGTTIVCGDSHTSTHGAFGALAHGIGTSEVEHVLATQTLIQKKAKNMRVTVDGQLPDGVTAKDVILAIIGEIGTAGGTGYVLEYAGDAIRSLSMEGRMTVCNMSIEGGARAGLIAPDERAYEFLKGRPLAPKGAAWDAALRYWDTLRSDDGAHFDHELKLDAAALPPIVTWGTSPEDVISVTGRVPNPADIADEAKRLSKERALAYMGLTPGTKITDIKIDRMFIGSCTNGRIEDLRAAAKVAEGKTVNANVNAIIVPGSGLVKEQAEAEGLDKIFIKAGFEWREPGCSMCLAMNPDKLAPEERCASTSNRNFEGRQGFKGRTHLVSPAMAAAAAIAGHFVDIRDWH.

The [4Fe-4S] cluster site is built by cysteine 350, cysteine 410, and cysteine 413.

The protein belongs to the aconitase/IPM isomerase family. LeuC type 1 subfamily. As to quaternary structure, heterodimer of LeuC and LeuD. Requires [4Fe-4S] cluster as cofactor.

It carries out the reaction (2R,3S)-3-isopropylmalate = (2S)-2-isopropylmalate. It participates in amino-acid biosynthesis; L-leucine biosynthesis; L-leucine from 3-methyl-2-oxobutanoate: step 2/4. Its function is as follows. Catalyzes the isomerization between 2-isopropylmalate and 3-isopropylmalate, via the formation of 2-isopropylmaleate. In Rhodopseudomonas palustris (strain ATCC BAA-98 / CGA009), this protein is 3-isopropylmalate dehydratase large subunit.